The chain runs to 112 residues: Larval cuticle protein 3 (112 aa).

The N-terminal stretch at 1–16 (MFKILLVCSLAALVAA) is a signal peptide. In terms of domain architecture, Chitin-binding type R&amp;R spans 31-92 (PDGFVSKLVL…PQSDLLPTPP (62 aa)).

Functionally, component of the larval cuticle. The sequence is that of Larval cuticle protein 3 (Lcp3) from Drosophila melanogaster (Fruit fly).